The chain runs to 135 residues: Regulator of ribonuclease activity B (135 aa).

A disordered region spans residues 114–135; it reads WGTYFESDEDDEEDESEDKPEA. The segment covering 119 to 135 has biased composition (acidic residues); it reads ESDEDDEEDESEDKPEA.

It belongs to the RraB family. In terms of assembly, interacts with the C-terminal region of Rne.

It is found in the cytoplasm. Globally modulates RNA abundance by binding to RNase E (Rne) and regulating its endonucleolytic activity. Can modulate Rne action in a substrate-dependent manner by altering the composition of the degradosome. The protein is Regulator of ribonuclease activity B of Photobacterium profundum (strain SS9).